A 219-amino-acid chain; its full sequence is Ribose-5-phosphate isomerase A (219 aa).

Residues 28–31 (SGST), 81–84 (DGAD), and 94–97 (KGGG) contribute to the substrate site. Residue glutamate 103 is the Proton acceptor of the active site. Lysine 121 contributes to the substrate binding site.

It belongs to the ribose 5-phosphate isomerase family. As to quaternary structure, homodimer.

The enzyme catalyses aldehydo-D-ribose 5-phosphate = D-ribulose 5-phosphate. Its pathway is carbohydrate degradation; pentose phosphate pathway; D-ribose 5-phosphate from D-ribulose 5-phosphate (non-oxidative stage): step 1/1. Its function is as follows. Catalyzes the reversible conversion of ribose-5-phosphate to ribulose 5-phosphate. This Haemophilus ducreyi (strain 35000HP / ATCC 700724) protein is Ribose-5-phosphate isomerase A.